Reading from the N-terminus, the 922-residue chain is GPI inositol-deacylase (922 aa).

The Cytoplasmic portion of the chain corresponds to Met1–Leu11. The helical transmembrane segment at Ala12–Phe32 threads the bilayer. Residues Glu33–Ala597 are Lumenal-facing. Residue Ser174 is part of the active site. N-linked (GlcNAc...) asparagine glycosylation is found at Asn363, Asn402, and Asn558. Residues Leu598–Leu618 traverse the membrane as a helical segment. Over Ser619 to Pro641 the chain is Cytoplasmic. Residues Phe642 to Val662 form a helical membrane-spanning segment. The Lumenal segment spans residues Leu663–Asp668. The chain crosses the membrane as a helical span at residues Ala669–Phe689. Residues Gly690–Ala694 are Cytoplasmic-facing. The helical transmembrane segment at Tyr695–Leu715 threads the bilayer. The Lumenal portion of the chain corresponds to Lys716–Pro733. The helical transmembrane segment at Val734 to Leu754 threads the bilayer. The Cytoplasmic portion of the chain corresponds to Ser755–His816. The segment at Asn776 to Asn801 is disordered. Over residues Lys782–His793 the composition is skewed to basic residues. A helical membrane pass occupies residues Ser817 to Trp837. The Lumenal segment spans residues Ser838–Lys853. A helical membrane pass occupies residues Pro854–Ile874. Residues Lys875–Val894 are Cytoplasmic-facing. A helical membrane pass occupies residues Ile895 to Phe915. Residues His916–Met922 are Lumenal-facing.

It belongs to the GPI inositol-deacylase family.

The protein resides in the endoplasmic reticulum membrane. Functionally, GPI inositol-deacylase that catalyzes the remove of the acyl chain linked to the 2-OH position of inositol ring from the GPI-anchored protein (GPI-AP) in the endoplasmic reticulum. Initiates the post-attachment remodeling phase of GPI-AP biogenesis and participates in endoplasmic reticulum (ER)-to-Golgi transport of GPI-anchored protein. The chain is GPI inositol-deacylase from Rattus norvegicus (Rat).